The primary structure comprises 126 residues: Holo-[acyl-carrier-protein] synthase (126 aa).

Residues Asp8 and Glu59 each contribute to the Mg(2+) site.

This sequence belongs to the P-Pant transferase superfamily. AcpS family. It depends on Mg(2+) as a cofactor.

It localises to the cytoplasm. It carries out the reaction apo-[ACP] + CoA = holo-[ACP] + adenosine 3',5'-bisphosphate + H(+). Transfers the 4'-phosphopantetheine moiety from coenzyme A to a Ser of acyl-carrier-protein. The sequence is that of Holo-[acyl-carrier-protein] synthase from Rickettsia akari (strain Hartford).